Reading from the N-terminus, the 487-residue chain is Glutamyl-tRNA(Gln) amidotransferase subunit A (487 aa).

Catalysis depends on charge relay system residues Lys-74 and Ser-149. Ser-173 functions as the Acyl-ester intermediate in the catalytic mechanism.

The protein belongs to the amidase family. GatA subfamily. Heterotrimer of A, B and C subunits.

It carries out the reaction L-glutamyl-tRNA(Gln) + L-glutamine + ATP + H2O = L-glutaminyl-tRNA(Gln) + L-glutamate + ADP + phosphate + H(+). Functionally, allows the formation of correctly charged Gln-tRNA(Gln) through the transamidation of misacylated Glu-tRNA(Gln) in organisms which lack glutaminyl-tRNA synthetase. The reaction takes place in the presence of glutamine and ATP through an activated gamma-phospho-Glu-tRNA(Gln). The chain is Glutamyl-tRNA(Gln) amidotransferase subunit A from Synechococcus sp. (strain CC9311).